A 358-amino-acid polypeptide reads, in one-letter code: DnaJ homolog subfamily B member 11 (358 aa).

Positions 1-22 are cleaved as a signal peptide; it reads MAPQNLGTLCLLLLYLLGAAIA. The J domain maps to 25–90; sequence DFYKILGVPR…EKRKQYDTYG (66 aa). Threonine 188 carries the post-translational modification Phosphothreonine. N-linked (GlcNAc...) asparagine glycosylation occurs at asparagine 261.

As to quaternary structure, part of a large chaperone multiprotein complex comprising DNAJB11, HSP90B1, HSPA5, HYOU, PDIA2, PDIA4, PDIA6, PPIB, SDF2L1, UGGT1 and very small amounts of ERP29, but not, or at very low levels, CALR nor CANX. Binds to denatured substrates in an ATP-independent manner. Interacts via the J domain with HSPA5 in an ATP-dependent manner. Post-translationally, contains high-mannose Endo H-sensitive carbohydrates. In terms of processing, cys-169, Cys-171, Cys-193 and Cys-196 form intramolecular disulfide bonds. The preferential partner for each Cys is not known. In terms of tissue distribution, pancreas.

It localises to the endoplasmic reticulum lumen. In terms of biological role, as a co-chaperone for HSPA5 it is required for proper folding, trafficking or degradation of proteins. Binds directly to both unfolded proteins that are substrates for ERAD and nascent unfolded peptide chains, but dissociates from the HSPA5-unfolded protein complex before folding is completed. May help recruiting HSPA5 and other chaperones to the substrate. Stimulates HSPA5 ATPase activity. It is necessary for maturation and correct trafficking of PKD1. This chain is DnaJ homolog subfamily B member 11 (DNAJB11), found in Canis lupus familiaris (Dog).